The primary structure comprises 241 residues: Dolichol-phosphate mannosyltransferase subunit 1 (241 aa).

GDP-alpha-D-mannose-binding residues include proline 13, tyrosine 15, glutamate 17, isoleucine 44, aspartate 46, aspartate 99, alanine 100, aspartate 101, arginine 128, arginine 215, and lysine 221. Position 101 (aspartate 101) interacts with Mg(2+). Residue aspartate 101 coordinates Mn(2+).

It belongs to the glycosyltransferase 2 family. Mg(2+) serves as cofactor. Mn(2+) is required as a cofactor. The cofactor is Ca(2+).

The protein localises to the endoplasmic reticulum. It catalyses the reaction a di-trans,poly-cis-dolichyl phosphate + GDP-alpha-D-mannose = a di-trans,poly-cis-dolichyl beta-D-mannosyl phosphate + GDP. It participates in protein modification; protein glycosylation. Transfers mannose from GDP-mannose to dolichol monophosphate to form dolichol phosphate mannose (Dol-P-Man) which is the mannosyl donor in pathways leading to N-glycosylation, glycosyl phosphatidylinositol membrane anchoring, and O-mannosylation of proteins. The chain is Dolichol-phosphate mannosyltransferase subunit 1 from Drosophila melanogaster (Fruit fly).